Consider the following 202-residue polypeptide: Large ribosomal subunit protein uL5 (202 aa).

A compositionally biased stretch (low complexity) spans 1-17; sequence MSAKAATKNATKVAVKA. Positions 1–30 are disordered; that stretch reads MSAKAATKNATKVAVKAPEATTPVETKKSK.

It belongs to the universal ribosomal protein uL5 family. Component of the large ribosomal subunit.

The protein resides in the nucleus. It localises to the cytoplasm. Its function is as follows. Component of the ribosome, a large ribonucleoprotein complex responsible for the synthesis of proteins in the cell. The small ribosomal subunit (SSU) binds messenger RNAs (mRNAs) and translates the encoded message by selecting cognate aminoacyl-transfer RNA (tRNA) molecules. The large subunit (LSU) contains the ribosomal catalytic site termed the peptidyl transferase center (PTC), which catalyzes the formation of peptide bonds, thereby polymerizing the amino acids delivered by tRNAs into a polypeptide chain. The nascent polypeptides leave the ribosome through a tunnel in the LSU and interact with protein factors that function in enzymatic processing, targeting, and the membrane insertion of nascent chains at the exit of the ribosomal tunnel. The protein is Large ribosomal subunit protein uL5 (rpl11) of Dictyostelium discoideum (Social amoeba).